Here is a 578-residue protein sequence, read N- to C-terminus: Triokinase/FMN cyclase (578 aa).

Positions 9 to 336 (SVAGCADDAL…IDAETTASAW (328 aa)) constitute a DhaK domain. Residues 56-59 (GSGH), Lys109, and Asp114 contribute to the dihydroxyacetone site. Residue His221 is the Tele-hemiaminal-histidine intermediate of the active site. Ser350 carries the post-translational modification Phosphoserine. Residues 372–571 (KQMVLVLEWV…AAAILRAILE (200 aa)) form the DhaL domain. Residues 401 to 404 (DGDC), 446 to 447 (SS), Gly486, and 494 to 495 (TM) contribute to the ATP site. 2 positions are modified to phosphoserine: Ser511 and Ser545. 556–558 (DPG) is an ATP binding site.

In terms of assembly, homodimer. Interacts with IFIH1 (via the CARD domains), the interaction is inhibited by viral infection. Mg(2+) serves as cofactor. The cofactor is Mn(2+). Requires Co(2+) as cofactor.

The enzyme catalyses dihydroxyacetone + ATP = dihydroxyacetone phosphate + ADP + H(+). It catalyses the reaction D-glyceraldehyde + ATP = D-glyceraldehyde 3-phosphate + ADP + H(+). It carries out the reaction FAD = riboflavin cyclic-4',5'-phosphate + AMP + H(+). Its activity is regulated as follows. Each activity is inhibited by the substrate(s) of the other. Its function is as follows. Catalyzes both the phosphorylation of dihydroxyacetone and of glyceraldehyde, and the splitting of ribonucleoside diphosphate-X compounds among which FAD is the best substrate. Represses IFIH1-mediated cellular antiviral response. In Bos taurus (Bovine), this protein is Triokinase/FMN cyclase (TKFC).